The primary structure comprises 1193 residues: Tubulin monoglutamylase TTLL4 (1193 aa).

2 disordered regions span residues 1–37 (MASA…EKPS) and 468–535 (VHLD…CSSL). The span at 24-34 (PSGTVSASPSE) shows a compositional bias: polar residues. The segment covering 472 to 482 (QPGKEPEEAKD) has biased composition (basic and acidic residues). A compositionally biased stretch (acidic residues) spans 502 to 515 (EPEDTEDELGDGLE). Residues 599 to 942 (RRLLRWKMST…VLPNMEDIIS (344 aa)) enclose the TTL domain. S686 carries the post-translational modification Phosphoserine. Residues K716, 722 to 723 (RG), 744 to 747 (QRYL), and 757 to 759 (KFD) each bind ATP. R722 lines the a protein pocket. Residue R783 participates in L-glutamate binding. 804 to 805 (TN) serves as a coordination point for ATP. L-glutamate contacts are provided by Y806, S807, and K828. Mg(2+)-binding residues include D888, E901, and N903. A c-MTBD region region spans residues 913-1027 (PLDISIKGQM…RGQFERIFPS (115 aa)). An L-glutamate-binding site is contributed by K919. Over residues 943 to 960 (SSSSPSSSSGSSTSLPSS) the composition is skewed to low complexity. Disordered stretches follow at residues 943–966 (SSSS…DKCQ) and 1092–1193 (MTTS…AVSS). Polar residues-rich tracts occupy residues 1092 to 1102 (MTTSKGDGTPN) and 1131 to 1153 (SQAG…NTSK). Over residues 1168–1182 (SGQSSRLSAASASQS) the composition is skewed to low complexity. The span at 1183–1193 (VTDSRLTAVSS) shows a compositional bias: polar residues.

This sequence belongs to the tubulin--tyrosine ligase family. The cofactor is Mg(2+). Highly expressed in testis. Expressed in brain, heart, kidney, liver, lung, muscle and spleen. In the brain, expressed in ependymal cilia, the cortex and the striatum. Expressed in blastomere.

The protein localises to the cytoplasm. The protein resides in the cell projection. It localises to the cilium. It is found in the cytoskeleton. Its subcellular location is the cilium basal body. The enzyme catalyses L-glutamyl-[protein] + L-glutamate + ATP = gamma-L-glutamyl-L-glutamyl-[protein] + ADP + phosphate + H(+). Functionally, monoglutamylase which modifies both tubulin and non-tubulin proteins, adding a single glutamate on the gamma-carboxyl group of specific glutamate residues of target proteins. Involved in the side-chain initiation step of the polyglutamylation reaction but not in the elongation step. Preferentially modifies beta-tail tubulin over the alpha-tubulin. Monoglutamylates nucleosome assembly proteins NAP1L1 and NAP1L4. Monoglutamylates nucleotidyltransferase CGAS, leading to inhibition of CGAS catalytic activity, thereby preventing antiviral defense function. Involved in KLF4 glutamylation which impedes its ubiquitination, thereby leading to somatic cell reprogramming, pluripotency maintenance and embryogenesis. This Mus musculus (Mouse) protein is Tubulin monoglutamylase TTLL4.